We begin with the raw amino-acid sequence, 414 residues long: Dual-specificity RNA methyltransferase RlmN (414 aa).

E127 (proton acceptor) is an active-site residue. Residues 133–380 form the Radical SAM core domain; sequence GEGRGTLCVS…SPIRMPRGRD (248 aa). A disulfide bridge connects residues C140 and C385. [4Fe-4S] cluster-binding residues include C147, C151, and C154. S-adenosyl-L-methionine-binding positions include 211–212, S243, 265–267, and N342; these read GE and SLH. The S-methylcysteine intermediate role is filled by C385.

This sequence belongs to the radical SAM superfamily. RlmN family. The cofactor is [4Fe-4S] cluster.

Its subcellular location is the cytoplasm. It carries out the reaction adenosine(2503) in 23S rRNA + 2 reduced [2Fe-2S]-[ferredoxin] + 2 S-adenosyl-L-methionine = 2-methyladenosine(2503) in 23S rRNA + 5'-deoxyadenosine + L-methionine + 2 oxidized [2Fe-2S]-[ferredoxin] + S-adenosyl-L-homocysteine. It catalyses the reaction adenosine(37) in tRNA + 2 reduced [2Fe-2S]-[ferredoxin] + 2 S-adenosyl-L-methionine = 2-methyladenosine(37) in tRNA + 5'-deoxyadenosine + L-methionine + 2 oxidized [2Fe-2S]-[ferredoxin] + S-adenosyl-L-homocysteine. In terms of biological role, specifically methylates position 2 of adenine 2503 in 23S rRNA and position 2 of adenine 37 in tRNAs. m2A2503 modification seems to play a crucial role in the proofreading step occurring at the peptidyl transferase center and thus would serve to optimize ribosomal fidelity. The protein is Dual-specificity RNA methyltransferase RlmN of Bartonella bacilliformis (strain ATCC 35685 / KC583 / Herrer 020/F12,63).